The chain runs to 92 residues: Acylphosphatase (92 aa).

A disulfide bond links cysteine 5 and cysteine 49. The region spanning 5 to 92 (CIIAWVYGRV…SGELTDFRIR (88 aa)) is the Acylphosphatase-like domain. Catalysis depends on residues arginine 20 and asparagine 38.

It belongs to the acylphosphatase family.

It carries out the reaction an acyl phosphate + H2O = a carboxylate + phosphate + H(+). The sequence is that of Acylphosphatase from Escherichia coli O6:H1 (strain CFT073 / ATCC 700928 / UPEC).